We begin with the raw amino-acid sequence, 33 residues long: MNLELVVQLGSLLLITVAGPLIVFFLFIRQGNL.

A helical membrane pass occupies residues 8–28; it reads QLGSLLLITVAGPLIVFFLFI.

Belongs to the Psb30/Ycf12 family. As to quaternary structure, PSII is composed of 1 copy each of membrane proteins PsbA, PsbB, PsbC, PsbD, PsbE, PsbF, PsbH, PsbI, PsbJ, PsbK, PsbL, PsbM, PsbT, PsbY, PsbZ, Psb30/Ycf12, peripheral proteins of the oxygen-evolving complex and a large number of cofactors. It forms dimeric complexes.

It localises to the plastid. The protein localises to the chloroplast thylakoid membrane. Its function is as follows. A core subunit of photosystem II (PSII), probably helps stabilize the reaction center. The sequence is that of Photosystem II reaction center protein Psb30 from Euglena anabaena (Euglenaria anabaena).